Reading from the N-terminus, the 151-residue chain is Meiotically up-regulated gene 114 protein (151 aa).

It localises to the cytoplasm. Its function is as follows. Has a role in meiosis. This Schizosaccharomyces pombe (strain 972 / ATCC 24843) (Fission yeast) protein is Meiotically up-regulated gene 114 protein (mug114).